Reading from the N-terminus, the 442-residue chain is 23S rRNA (uracil(1939)-C(5))-methyltransferase RlmD (442 aa).

The TRAM domain maps to 10-75 (AKQTAKNCCK…RQYGRAKANK (66 aa)). 4 residues coordinate [4Fe-4S] cluster: cysteine 88, cysteine 94, cysteine 97, and cysteine 173. Positions 276, 305, 310, 326, 353, and 374 each coordinate S-adenosyl-L-methionine. The active-site Nucleophile is cysteine 400.

The protein belongs to the class I-like SAM-binding methyltransferase superfamily. RNA M5U methyltransferase family. RlmD subfamily.

The catalysed reaction is uridine(1939) in 23S rRNA + S-adenosyl-L-methionine = 5-methyluridine(1939) in 23S rRNA + S-adenosyl-L-homocysteine + H(+). Its function is as follows. Catalyzes the formation of 5-methyl-uridine at position 1939 (m5U1939) in 23S rRNA. In Haemophilus ducreyi (strain 35000HP / ATCC 700724), this protein is 23S rRNA (uracil(1939)-C(5))-methyltransferase RlmD.